A 225-amino-acid chain; its full sequence is 2-phytyl-1,4-naphtoquinone methyltransferase (225 aa).

It belongs to the class I-like SAM-binding methyltransferase superfamily. MenG/UbiE family.

The enzyme catalyses demethylphylloquinol + S-adenosyl-L-methionine = phylloquinol + S-adenosyl-L-homocysteine + H(+). The protein operates within cofactor biosynthesis; phylloquinone biosynthesis. Its function is as follows. Methyltransferase required for the conversion of 2-phytyl-1,4-beta-naphthoquinol to phylloquinol. The chain is 2-phytyl-1,4-naphtoquinone methyltransferase from Thermosynechococcus vestitus (strain NIES-2133 / IAM M-273 / BP-1).